The chain runs to 432 residues: Amino-acid acetyltransferase (432 aa).

An N-acetyltransferase domain is found at 286–425; the sequence is ELVREAAIED…ASLYNFQRNS (140 aa).

It belongs to the acetyltransferase family. ArgA subfamily.

Its subcellular location is the cytoplasm. It carries out the reaction L-glutamate + acetyl-CoA = N-acetyl-L-glutamate + CoA + H(+). The protein operates within amino-acid biosynthesis; L-arginine biosynthesis; N(2)-acetyl-L-ornithine from L-glutamate: step 1/4. The protein is Amino-acid acetyltransferase of Pseudomonas syringae pv. tomato (strain ATCC BAA-871 / DC3000).